The primary structure comprises 457 residues: Keratin, type II cytoskeletal 7 (457 aa).

N-acetylserine is present on S2. S2 carries the phosphoserine modification. Residues S2–E84 form a head region. Residue S7 is glycosylated (O-linked (GlcNAc) serine). R15 bears the Dimethylated arginine; alternate mark. Omega-N-methylarginine; alternate is present on R15. Phosphoserine occurs at positions 47 and 65. Positions E84–L120 are coil 1A. Positions E85–L397 constitute an IF rod domain. At T91 the chain carries Phosphothreonine. Positions Q121 to Q138 are linker 1. Residue K124 forms a Glycyl lysine isopeptide (Lys-Gly) (interchain with G-Cter in SUMO2) linkage. The segment at I139 to L230 is coil 1B. K173 carries the post-translational modification N6-acetyllysine. A phosphoserine mark is found at S211, S246, and S248. The tract at residues Q231–I254 is linker 12. A coil 2 region spans residues I255–E393. Glycyl lysine isopeptide (Lys-Gly) (interchain with G-Cter in SUMO2) cross-links involve residues K259 and K280. T283 carries the phosphothreonine modification. Residues K290 and K325 each participate in a glycyl lysine isopeptide (Lys-Gly) (interchain with G-Cter in SUMO2) cross-link. The tract at residues E394–N457 is tail.

Belongs to the intermediate filament family. In terms of assembly, heterotetramer of two type I and two type II keratins. Interacts with eukaryotic translation initiator factor 3 (eIF3) subunit EIF3S10. Interacts with GPER1. Arg-15 is dimethylated, probably to asymmetric dimethylarginine. In terms of tissue distribution, expressed in most simple epithelia tested including liver, lactating mammary gland, lung, kidney, stomach, duodenum, colon, oviduct, uterus, pancreas, epididymis, prostate, preputial gland and mesothelium, and in most stratified epithelia tested including dorsal skin, paw/toe, tail, tongue, cervix, forestomach, and bladder. Also expressed in Henle layer of the inner root sheath of whisker follicle.

Its function is as follows. Blocks interferon-dependent interphase and stimulates DNA synthesis in cells. The polypeptide is Keratin, type II cytoskeletal 7 (Mus musculus (Mouse)).